The sequence spans 852 residues: Exported protein YdbA (852 aa).

A signal peptide spans 1–21 (MQRKTLLSACIALALSGQGWA). Disordered stretches follow at residues 30-50 (TTGE…KLSP), 91-145 (DDDH…FNND), 307-354 (TITN…QDGD), 407-449 (TNGG…KVIQ), and 506-531 (NGGT…VDGK). A compositionally biased stretch (low complexity) spans 307 to 319 (TITNGGTGTQING). The span at 339 to 348 (GTEINGNNGK) shows a compositional bias: polar residues. Residues 506–516 (NGGTGTQINGN) show a composition bias toward low complexity. A compositionally biased stretch (polar residues) spans 517 to 526 (DATANNSGKT).

The protein localises to the secreted. Functionally, the full-length protein (which is about 2000 amino acids long) is part of the autotransporter family. The polypeptide is Exported protein YdbA (ydbA) (Escherichia coli (strain K12)).